A 229-amino-acid polypeptide reads, in one-letter code: Acidic leucine-rich nuclear phosphoprotein 32-related protein 1 (229 aa).

LRR repeat units lie at residues 19–40 (TVDT…TDQL), 42–63 (NLEM…PTLP), 64–85 (ALTY…DVLV), and 90–110 (DLKK…RCLK). The LRRCT domain occupies 124-164 (PSLGLLEDYREKMFEMIPSLKILDGCDVDGEEVEEEFAGEG). The segment covering 155 to 177 (EVEEEFAGEGGEDSEEGSGDEDG) has biased composition (acidic residues). Residues 155-229 (EVEEEFAGEG…DNKKAAGDDE (75 aa)) form a disordered region. Residues 219-229 (PDNKKAAGDDE) show a composition bias toward basic and acidic residues.

Belongs to the ANP32 family.

This Caenorhabditis elegans protein is Acidic leucine-rich nuclear phosphoprotein 32-related protein 1.